The chain runs to 251 residues: Octanoyltransferase (251 aa).

Positions 56 to 241 (ADTGDEIWVV…NLDGASAAAD (186 aa)) constitute a BPL/LPL catalytic domain. Substrate contacts are provided by residues 96 to 103 (RGGQITYH), 168 to 170 (ALG), and 181 to 183 (GLS). Cysteine 199 functions as the Acyl-thioester intermediate in the catalytic mechanism.

Belongs to the LipB family.

The protein localises to the cytoplasm. The enzyme catalyses octanoyl-[ACP] + L-lysyl-[protein] = N(6)-octanoyl-L-lysyl-[protein] + holo-[ACP] + H(+). Its pathway is protein modification; protein lipoylation via endogenous pathway; protein N(6)-(lipoyl)lysine from octanoyl-[acyl-carrier-protein]: step 1/2. Functionally, catalyzes the transfer of endogenously produced octanoic acid from octanoyl-acyl-carrier-protein onto the lipoyl domains of lipoate-dependent enzymes. Lipoyl-ACP can also act as a substrate although octanoyl-ACP is likely to be the physiological substrate. The chain is Octanoyltransferase from Burkholderia cenocepacia (strain HI2424).